We begin with the raw amino-acid sequence, 916 residues long: MTAGAGVLLLLLSLSGALRAHNEDLTTRETCKAGFSEDDYTALISQNILEGEKLLQVKFSSCVGTKGTQYETNSMDFKVGADGTVFATRELQVPSEQVAFTVTAWDSQTAEKWDAVVRLLVAQTSSPHSGHKPQKGKKVVALDPSPPPKDTLLPWPQHQNANGLRRRKRDWVIPPINVPENSRGPFPQQLVRIRSDKDNDIPIRYSITGVGADQPPMEVFSIDSMSGRMYVTRPMDREEHASYHLRAHAVDMNGNKVENPIDLYIYVIDMNDNRPEFINQVYNGSVDEGSKPGTYVMTVTANDADDSTTANGMVRYRIVTQTPQSPSQNMFTINSETGDIVTVAAGLDREKVQQYTVIVQATDMEGNLNYGLSNTATAIITVTDVNDNPPEFTASTFAGEVPENRVETVVANLTVMDRDQPHSPNWNAVYRIISGDPSGHFSVRTDPVTNEGMVTVVKAVDYELNRAFMLTVMVSNQAPLASGIQMSFQSTAGVTISIMDINEAPYFPSNHKLIRLEEGVPPGTVLTTFSAVDPDRFMQQAVRYSKLSDPASWLHINATNGQITTAAVLDRESLYTKNNVYEATFLAADNGIPPASGTGTLQIYLIDINDNAPELLPKEAQICEKPNLNAINITAADADVDPNIGPYVFELPFVPAAVRKNWTITRLNGDYAQLSLRILYLEAGMYDVPIIVTDSGNPPLSNTSIIKVKVCPCDDNGDCTTIGAVAAAGLGTGAIVAILICILILLTMVLLFVMWMKRREKERHTKQLLIDPEDDVRDNILKYDEEGGGEEDQDYDLSQLQQPEAMGHVPSKAPGVRRVDERPVGAEPQYPIRPMVPHPGDIGDFINEGLRAADNDPTAPPYDSLLVFDYEGSGSTAGSVSSLNSSSSGDQDYDYLNDWGPRFKKLADMYGGGEED.

The first 20 residues, 1 to 20 (MTAGAGVLLLLLSLSGALRA), serve as a signal peptide directing secretion. The propeptide occupies 21–169 (HNEDLTTRET…NANGLRRRKR (149 aa)). Residues 124–168 (TSSPHSGHKPQKGKKVVALDPSPPPKDTLLPWPQHQNANGLRRRK) form a disordered region. The span at 129–138 (SGHKPQKGKK) shows a compositional bias: basic residues. 5 Cadherin domains span residues 170–277 (DWVI…RPEF), 278–392 (INQV…PPEF), 393–507 (TAST…APYF), 508–613 (PSNH…DNAP), and 614–724 (ELLP…TIGA). The Extracellular portion of the chain corresponds to 170-734 (DWVIPPINVP…VAAAGLGTGA (565 aa)). 6 N-linked (GlcNAc...) asparagine glycosylation sites follow: N283, N412, N557, N632, N661, and N702. The helical transmembrane segment at 735-756 (IVAILICILILLTMVLLFVMWM) threads the bilayer. Residues 757–916 (KRREKERHTK…ADMYGGGEED (160 aa)) are Cytoplasmic-facing. The tract at residues 806–838 (MGHVPSKAPGVRRVDERPVGAEPQYPIRPMVPH) is disordered.

In terms of tissue distribution, expressed mainly in brain but also found in other tissues.

It localises to the cell membrane. Its function is as follows. Cadherins are calcium-dependent cell adhesion proteins. They preferentially interact with themselves in a homophilic manner in connecting cells; cadherins may thus contribute to the sorting of heterogeneous cell types. May play an important role in retinal development. The polypeptide is Cadherin-4 (CDH4) (Homo sapiens (Human)).